Consider the following 973-residue polypeptide: DENN domain-containing protein C297.05 (973 aa).

Residues 69–79 show a composition bias toward polar residues; sequence AHHNTTGSNSV. Positions 69 to 136 are disordered; the sequence is AHHNTTGSNS…YHSRKPYSEP (68 aa). Phosphoserine occurs at positions 134 and 318. The 259-residue stretch at 169–427 folds into the uDENN domain; the sequence is ALPLFAATHP…NICCDVPLPP (259 aa). Positions 449-586 constitute a cDENN domain; sequence VNEIPGWNDV…LRSKLQAHLK (138 aa). Residues 588 to 919 enclose the dDENN domain; that stretch reads AAPLHDKFYV…DRCELDLNDP (332 aa). The disordered stretch occupies residues 693–713; sequence RNFSSPPFTRPASPSSSKFRF. Position 726 is a phosphoserine (serine 726). Positions 729–750 are disordered; it reads SPYSVPELRSSESNQNKAGSIN. A compositionally biased stretch (polar residues) spans 739-750; that stretch reads SESNQNKAGSIN.

Its subcellular location is the cytoplasm. It localises to the nucleus. This is DENN domain-containing protein C297.05 from Schizosaccharomyces pombe (strain 972 / ATCC 24843) (Fission yeast).